We begin with the raw amino-acid sequence, 293 residues long: Ribosomal protein L11 methyltransferase (293 aa).

S-adenosyl-L-methionine-binding residues include threonine 145, glycine 166, aspartate 188, and asparagine 230.

Belongs to the methyltransferase superfamily. PrmA family.

The protein resides in the cytoplasm. The enzyme catalyses L-lysyl-[protein] + 3 S-adenosyl-L-methionine = N(6),N(6),N(6)-trimethyl-L-lysyl-[protein] + 3 S-adenosyl-L-homocysteine + 3 H(+). Methylates ribosomal protein L11. The protein is Ribosomal protein L11 methyltransferase of Escherichia coli O7:K1 (strain IAI39 / ExPEC).